Here is a 214-residue protein sequence, read N- to C-terminus: Sugar fermentation stimulation protein homolog (214 aa).

The protein belongs to the SfsA family.

In Aquifex aeolicus (strain VF5), this protein is Sugar fermentation stimulation protein homolog.